Reading from the N-terminus, the 326-residue chain is Mitochondrial glycine transporter (326 aa).

3 Solcar repeats span residues 45 to 134 (HPVI…SKQY), 141 to 225 (PTAL…TRAT), and 237 to 321 (LMPL…MMAK). Helical transmembrane passes span 51–76 (FLCG…TRLQ), 109–135 (GMSP…KQYF), 147–172 (VILG…TRYE), 200–223 (GLTA…SQTR), 241–267 (VNFS…KTHM), and 296–314 (GSVP…AWTV).

The protein belongs to the mitochondrial carrier (TC 2.A.29) family. SLC25A38 subfamily.

It is found in the mitochondrion inner membrane. It catalyses the reaction glycine(in) = glycine(out). Its function is as follows. Mitochondrial glycine transporter that imports glycine into the mitochondrial matrix. Plays an important role in providing glycine for the first enzymatic step in heme biosynthesis, the condensation of glycine with succinyl-CoA to produce 5-aminolevulinate (ALA) in the mitochondrial matrix. Required during erythropoiesis. Functionally, plays a role as pro-apoptotic protein that induces caspase-dependent apoptosis. This chain is Mitochondrial glycine transporter, found in Rattus norvegicus (Rat).